A 62-amino-acid polypeptide reads, in one-letter code: Photosystem II reaction center protein Z (62 aa).

Transmembrane regions (helical) follow at residues 8 to 28 (ALIA…VAYA) and 41 to 61 (YLGS…NFFV).

The protein belongs to the PsbZ family. In terms of assembly, PSII is composed of 1 copy each of membrane proteins PsbA, PsbB, PsbC, PsbD, PsbE, PsbF, PsbH, PsbI, PsbJ, PsbK, PsbL, PsbM, PsbT, PsbX, PsbY, PsbZ, Psb30/Ycf12, peripheral proteins PsbO, CyanoQ (PsbQ), PsbU, PsbV and a large number of cofactors. It forms dimeric complexes.

The protein resides in the cellular thylakoid membrane. May control the interaction of photosystem II (PSII) cores with the light-harvesting antenna, regulates electron flow through the 2 photosystem reaction centers. PSII is a light-driven water plastoquinone oxidoreductase, using light energy to abstract electrons from H(2)O, generating a proton gradient subsequently used for ATP formation. This Rippkaea orientalis (strain PCC 8801 / RF-1) (Cyanothece sp. (strain PCC 8801)) protein is Photosystem II reaction center protein Z.